An 87-amino-acid chain; its full sequence is Beta-defensin 109 (87 aa).

Positions 1–22 (MRLHLLLLILLLFSILLSPVRG) are cleaved as a signal peptide. Disulfide bonds link C31/C59, C38/C53, and C43/C60.

Belongs to the beta-defensin family.

Its subcellular location is the secreted. Its function is as follows. Has antibacterial activity. The chain is Beta-defensin 109 (DEFB109) from Pan troglodytes (Chimpanzee).